The chain runs to 328 residues: 4-hydroxythreonine-4-phosphate dehydrogenase (328 aa).

Thr-125 serves as a coordination point for substrate. Residues His-160, His-203, and His-269 each contribute to the a divalent metal cation site. Lys-277, Asn-286, and Arg-295 together coordinate substrate.

Belongs to the PdxA family. As to quaternary structure, homodimer. A divalent metal cation serves as cofactor.

It is found in the cytoplasm. The enzyme catalyses 4-(phosphooxy)-L-threonine + NAD(+) = 3-amino-2-oxopropyl phosphate + CO2 + NADH. Its pathway is cofactor biosynthesis; pyridoxine 5'-phosphate biosynthesis; pyridoxine 5'-phosphate from D-erythrose 4-phosphate: step 4/5. Its function is as follows. Catalyzes the NAD(P)-dependent oxidation of 4-(phosphooxy)-L-threonine (HTP) into 2-amino-3-oxo-4-(phosphooxy)butyric acid which spontaneously decarboxylates to form 3-amino-2-oxopropyl phosphate (AHAP). This Synechococcus sp. (strain RCC307) protein is 4-hydroxythreonine-4-phosphate dehydrogenase.